The chain runs to 217 residues: Large ribosomal subunit protein uL3 (217 aa).

Residues 127–162 (GFSRGPMSHGSKNHRAPGSTGAGTTPGRIYPGKRMA) are disordered. The span at 142 to 153 (APGSTGAGTTPG) shows a compositional bias: low complexity.

It belongs to the universal ribosomal protein uL3 family. In terms of assembly, part of the 50S ribosomal subunit. Forms a cluster with proteins L14 and L19.

Functionally, one of the primary rRNA binding proteins, it binds directly near the 3'-end of the 23S rRNA, where it nucleates assembly of the 50S subunit. The sequence is that of Large ribosomal subunit protein uL3 from Prochlorococcus marinus (strain MIT 9301).